We begin with the raw amino-acid sequence, 152 residues long: Nucleoside diphosphate kinase B (152 aa).

Positions 1-66 (MANLERTFIA…DRPFFPGLVK (66 aa)) are interaction with AKAP13. 6 residues coordinate ATP: K12, F60, R88, T94, R105, and N115. The Pros-phosphohistidine intermediate role is filled by H118.

Belongs to the NDK family. As to quaternary structure, hexamer of two different chains: An and B (A6, A5B, A4B2, A3B3, A2B4, AB5, B6). Interacts with CAPN8. Interacts with AKAP13. Interacts with ITGB1BP1 (via C-terminal domain region). Interacts with BCL2L10. Requires Mg(2+) as cofactor.

The protein localises to the cytoplasm. It localises to the cell projection. Its subcellular location is the lamellipodium. The protein resides in the ruffle. It is found in the nucleus. The enzyme catalyses a 2'-deoxyribonucleoside 5'-diphosphate + ATP = a 2'-deoxyribonucleoside 5'-triphosphate + ADP. It carries out the reaction a ribonucleoside 5'-diphosphate + ATP = a ribonucleoside 5'-triphosphate + ADP. The catalysed reaction is ATP + protein L-histidine = ADP + protein N-phospho-L-histidine.. Its function is as follows. Major role in the synthesis of nucleoside triphosphates other than ATP. The ATP gamma phosphate is transferred to the NDP beta phosphate via a ping-pong mechanism, using a phosphorylated active-site intermediate. Negatively regulates Rho activity by interacting with AKAP13/LBC. Acts as a transcriptional activator of the MYC gene; binds DNA non-specifically. Binds to both single-stranded guanine- and cytosine-rich strands within the nuclease hypersensitive element (NHE) III(1) region of the MYC gene promoter. Does not bind to duplex NHE III(1). Has G-quadruplex (G4) DNA-binding activity, which is independent of its nucleotide-binding and kinase activity. Binds both folded and unfolded G4 with similar low nanomolar affinities. Stabilizes folded G4s regardless of whether they are prefolded or not. Exhibits histidine protein kinase activity. This is Nucleoside diphosphate kinase B (NME2) from Pongo abelii (Sumatran orangutan).